The sequence spans 448 residues: Probable intron-encoded endonuclease bI1 (448 aa).

Positions 1-132 (MRLLKSHPLL…LMMATAFLGY (132 aa)) are cob exon 1 encoded. 3 helical membrane passes run 32–52 (FGSLLACCLIIQIVTGVTLAM), 86–106 (ASAFFFLVYLHIGRGMYYGSY), and 112–132 (LVWAIGTVILILMMATAFLGY). Positions 133 to 448 (QHSPKWFDIS…QWIVEDFSDK (316 aa)) are cob intron 1 encoded. The 92-residue stretch at 230-321 (DLSGVYMIIN…LKLLVPNYNI (92 aa)) folds into the GIY-YIG domain.

This sequence to endonucleases of group I introns of fungi and phage. The mature protein may arise from proteolytic cleavage of an in-frame translation of cob exon 1 plus intron 1, containing the bI1 open reading frame.

Its subcellular location is the mitochondrion inner membrane. In terms of biological role, mitochondrial DNA endonuclease involved in intron homing. The sequence is that of Probable intron-encoded endonuclease bI1 (bI1) from Neurospora crassa (strain ATCC 24698 / 74-OR23-1A / CBS 708.71 / DSM 1257 / FGSC 987).